A 500-amino-acid chain; its full sequence is Lysine--tRNA ligase (500 aa).

Positions 410 and 417 each coordinate Mg(2+).

This sequence belongs to the class-II aminoacyl-tRNA synthetase family. In terms of assembly, homodimer. Requires Mg(2+) as cofactor.

The protein resides in the cytoplasm. It carries out the reaction tRNA(Lys) + L-lysine + ATP = L-lysyl-tRNA(Lys) + AMP + diphosphate. In Pseudomonas putida (strain W619), this protein is Lysine--tRNA ligase.